Here is a 229-residue protein sequence, read N- to C-terminus: Enolase-phosphatase E1 (229 aa).

Mg(2+) contacts are provided by Asp7 and Glu9. Substrate contacts are provided by residues 122-123 (SS) and Lys161. Mg(2+) is bound at residue Asp186.

The protein belongs to the HAD-like hydrolase superfamily. MasA/MtnC family. In terms of assembly, monomer. Mg(2+) is required as a cofactor.

Its subcellular location is the cytoplasm. It localises to the nucleus. It catalyses the reaction 5-methylsulfanyl-2,3-dioxopentyl phosphate + H2O = 1,2-dihydroxy-5-(methylsulfanyl)pent-1-en-3-one + phosphate. It participates in amino-acid biosynthesis; L-methionine biosynthesis via salvage pathway; L-methionine from S-methyl-5-thio-alpha-D-ribose 1-phosphate: step 3/6. The protein operates within amino-acid biosynthesis; L-methionine biosynthesis via salvage pathway; L-methionine from S-methyl-5-thio-alpha-D-ribose 1-phosphate: step 4/6. In terms of biological role, bifunctional enzyme that catalyzes the enolization of 2,3-diketo-5-methylthiopentyl-1-phosphate (DK-MTP-1-P) into the intermediate 2-hydroxy-3-keto-5-methylthiopentenyl-1-phosphate (HK-MTPenyl-1-P), which is then dephosphorylated to form the acireductone 1,2-dihydroxy-3-keto-5-methylthiopentene (DHK-MTPene). The protein is Enolase-phosphatase E1 of Clavispora lusitaniae (strain ATCC 42720) (Yeast).